The following is a 376-amino-acid chain: Nuclear hormone receptor family member nhr-124 (376 aa).

The nuclear receptor DNA-binding region spans 11 to 89 (PNICAICHQK…LGMRYHNSSE (79 aa)). 2 consecutive NR C4-type zinc fingers follow at residues 14–34 (CAIC…CNAC) and 50–72 (CKKG…CRSC). The NR LBD domain occupies 125–371 (HLHALNETRY…FSKILTEACR (247 aa)).

This sequence belongs to the nuclear hormone receptor family.

The protein localises to the nucleus. In terms of biological role, orphan nuclear receptor. The protein is Nuclear hormone receptor family member nhr-124 (nhr-124) of Caenorhabditis elegans.